A 241-amino-acid polypeptide reads, in one-letter code: Keratin-associated protein 5-5 (241 aa).

Tandem repeats lie at residues 35–38 (CCKP), 41–44 (CCKP), 47–50 (CCVP), 105–108 (CCKP), 115–118 (CCKP), 133–136 (CCKP), 143–146 (CCKP), 161–164 (CCKP), 171–174 (CCKP), 181–184 (CCKP), 191–194 (CCKP), 201–204 (CCKP), 211–214 (CCKP), 221–224 (CCKP), and 231–234 (CCAP). The tract at residues 35-234 (CCKPVCCCKP…CCCQSSCCAP (200 aa)) is 15 X 4 AA repeats of C-C-X-P.

The protein belongs to the KRTAP type 5 family. Interacts with hair keratins.

In terms of biological role, in the hair cortex, hair keratin intermediate filaments are embedded in an interfilamentous matrix, consisting of hair keratin-associated protein (KRTAP), which are essential for the formation of a rigid and resistant hair shaft through their extensive disulfide bond cross-linking with abundant cysteine residues of hair keratins. The matrix proteins include the high-sulfur and high-glycine-tyrosine keratins. The protein is Keratin-associated protein 5-5 of Mus musculus (Mouse).